The primary structure comprises 208 residues: FMN-dependent NADH:quinone oxidoreductase (208 aa).

FMN is bound by residues 17–19 (SNS), 99–102 (MWNL), and 143–146 (SRGG).

This sequence belongs to the azoreductase type 1 family. Homodimer. FMN serves as cofactor.

It carries out the reaction 2 a quinone + NADH + H(+) = 2 a 1,4-benzosemiquinone + NAD(+). The catalysed reaction is N,N-dimethyl-1,4-phenylenediamine + anthranilate + 2 NAD(+) = 2-(4-dimethylaminophenyl)diazenylbenzoate + 2 NADH + 2 H(+). In terms of biological role, quinone reductase that provides resistance to thiol-specific stress caused by electrophilic quinones. Functionally, also exhibits azoreductase activity. Catalyzes the reductive cleavage of the azo bond in aromatic azo compounds to the corresponding amines. In Staphylococcus aureus (strain MSSA476), this protein is FMN-dependent NADH:quinone oxidoreductase.